Consider the following 233-residue polypeptide: Large ribosomal subunit protein mL67 (233 aa).

The tract at residues Arg214–Ala233 is disordered. The span at Gln215–Ala233 shows a compositional bias: low complexity.

Belongs to the mitochondrion-specific ribosomal protein mL67 family.

It localises to the nucleus. The protein localises to the mitochondrion. In terms of biological role, transcription factor involved in regulation of RNA polymerase II-dependent transcription. Also involved in regulation of mitochondrial DNA recombination, maintenance and repair, and generation of homoplasmic cells. The sequence is that of Large ribosomal subunit protein mL67 (MHR1) from Debaryomyces hansenii (strain ATCC 36239 / CBS 767 / BCRC 21394 / JCM 1990 / NBRC 0083 / IGC 2968) (Yeast).